A 397-amino-acid chain; its full sequence is Tryptophan synthase beta chain (397 aa).

Lysine 87 carries the N6-(pyridoxal phosphate)lysine modification.

Belongs to the TrpB family. Tetramer of two alpha and two beta chains. Requires pyridoxal 5'-phosphate as cofactor.

The catalysed reaction is (1S,2R)-1-C-(indol-3-yl)glycerol 3-phosphate + L-serine = D-glyceraldehyde 3-phosphate + L-tryptophan + H2O. It participates in amino-acid biosynthesis; L-tryptophan biosynthesis; L-tryptophan from chorismate: step 5/5. Its function is as follows. The beta subunit is responsible for the synthesis of L-tryptophan from indole and L-serine. The sequence is that of Tryptophan synthase beta chain from Salmonella choleraesuis (strain SC-B67).